The following is a 218-amino-acid chain: Adenylate kinase (218 aa).

Position 10–15 (10–15 (GAGKGT)) interacts with ATP. The segment at 30–59 (STGDMFRAAMANQTEMGRLAKSFIDKGELV) is NMP. Residues Thr-31, Arg-36, 57–59 (ELV), 86–89 (GYPR), and Gln-93 each bind AMP. Residues 127-165 (GRFICRSCGSTYHKVFNPTKVEGTCDVCGGHEFFQREDD) are LID. Arg-128 contributes to the ATP binding site. Zn(2+) contacts are provided by Cys-131 and Cys-134. An ATP-binding site is contributed by 137–138 (TY). Cys-151 and Cys-154 together coordinate Zn(2+). AMP is bound by residues Arg-162 and Arg-173. Gln-201 lines the ATP pocket.

This sequence belongs to the adenylate kinase family. Monomer.

The protein localises to the cytoplasm. The catalysed reaction is AMP + ATP = 2 ADP. Its pathway is purine metabolism; AMP biosynthesis via salvage pathway; AMP from ADP: step 1/1. Functionally, catalyzes the reversible transfer of the terminal phosphate group between ATP and AMP. Plays an important role in cellular energy homeostasis and in adenine nucleotide metabolism. The chain is Adenylate kinase from Streptococcus thermophilus (strain CNRZ 1066).